The following is a 334-amino-acid chain: Beta-hexosaminidase (334 aa).

Residues Asp-60, Arg-68, Arg-133, and 163 to 164 (KH) contribute to the substrate site. Residue His-176 is the Proton donor/acceptor of the active site. Asp-247 acts as the Nucleophile in catalysis.

Belongs to the glycosyl hydrolase 3 family. NagZ subfamily.

It is found in the cytoplasm. The enzyme catalyses Hydrolysis of terminal non-reducing N-acetyl-D-hexosamine residues in N-acetyl-beta-D-hexosaminides.. The protein operates within cell wall biogenesis; peptidoglycan recycling. Plays a role in peptidoglycan recycling by cleaving the terminal beta-1,4-linked N-acetylglucosamine (GlcNAc) from peptide-linked peptidoglycan fragments, giving rise to free GlcNAc, anhydro-N-acetylmuramic acid and anhydro-N-acetylmuramic acid-linked peptides. The polypeptide is Beta-hexosaminidase (Xanthomonas oryzae pv. oryzae (strain KACC10331 / KXO85)).